The chain runs to 155 residues: Deoxyuridine 5'-triphosphate nucleotidohydrolase (155 aa).

Substrate is bound by residues 74–76 (RSG), N87, and 91–93 (LID).

It belongs to the dUTPase family. Mg(2+) serves as cofactor.

It catalyses the reaction dUTP + H2O = dUMP + diphosphate + H(+). It functions in the pathway pyrimidine metabolism; dUMP biosynthesis; dUMP from dCTP (dUTP route): step 2/2. Its function is as follows. This enzyme is involved in nucleotide metabolism: it produces dUMP, the immediate precursor of thymidine nucleotides and it decreases the intracellular concentration of dUTP so that uracil cannot be incorporated into DNA. This is Deoxyuridine 5'-triphosphate nucleotidohydrolase from Xanthomonas oryzae pv. oryzae (strain PXO99A).